Reading from the N-terminus, the 379-residue chain is Armadillo repeat-containing X-linked protein 3 (379 aa).

Topologically, residues 1-6 (MGYARK) are mitochondrial intermembrane. Mitochondrion outer membrane (MOM)-targeting sequence stretches follow at residues 1–6 (MGYARK) and 26–37 (RLTRGRKQNKEK). The helical; Signal-anchor transmembrane segment at 7 to 29 (VGWVTAGLVIGAGACYCIYRLTR) threads the bilayer. Over 30–379 (GRKQNKEKMA…TERMFPKSQE (350 aa)) the chain is Cytoplasmic. The tract at residues 34–69 (NKEKMAEGGPGDVEDAGDCSGARYNDWSDDDDDSNE) is disordered. 3 positions are modified to phosphoserine: Ser61, Ser67, and Ser72. Residues 89–98 (RARARARARA) form a nuclear localization signal region. Ser110 is modified (phosphoserine). 3 ARM repeats span residues 111–151 (PNSD…NNAA), 153–192 (AFNR…NLSV), and 233–272 (VTNE…NLAE).

This sequence belongs to the eutherian X-chromosome-specific Armcx family. Interacts (via ARM domain) with MIRO1, MIRO2 and TRAK2. The interaction with Miro is calcium-dependent. Interacts with Sox10.

The protein resides in the mitochondrion outer membrane. It is found in the cytoplasm. It localises to the nucleus. Its function is as follows. Regulates mitochondrial aggregation and transport in axons in living neurons. May link mitochondria to the Trak2-kinesin motor complex via its interaction with Miro and Trak2. Mitochondrial distribution and dynamics is regulated through Armcx3 protein degradation, which is promoted by PCK and negatively regulated by Wnt1. Enhances the Sox10-mediated transactivation of the neuronal acetylcholine receptor subunit alpha-3 and beta-4 subunit gene promoters. In Rattus norvegicus (Rat), this protein is Armadillo repeat-containing X-linked protein 3 (Armcx3).